Reading from the N-terminus, the 122-residue chain is MYKYLFCLALIGCACADNINKDAQIRSFQNDATDAEGNYQYAYETSNGIQIQEAGNANGARGAVAYVSPEGEHISLTYTADEEGYHPVGDHLPTPPPVPAYVLRALEYIRTHPPAPAQKEQQ.

The first 16 residues, 1 to 16, serve as a signal peptide directing secretion; sequence MYKYLFCLALIGCACA. The 61-residue stretch at 36–96 folds into the Chitin-binding type R&amp;R domain; it reads EGNYQYAYET…PVGDHLPTPP (61 aa).

As to expression, imaginal (anterior) epidermis.

Functionally, component of the cuticle of the pupa of fruit fly. This chain is Pupal cuticle protein Edg-78E (Edg78E), found in Drosophila melanogaster (Fruit fly).